The sequence spans 425 residues: MNSISEEAKYTIQKVHAREILDSRGNPTVEVDIYTGCGFGRASVPSGASTGSNEALELRDKDADRYNGKGVLKAVDNINKTLSKELLGMDARNQREIDELMIALDGTENKKTFGANAILGISMATAKAAADSLGIALYRYLGGTNAFALPVPTMNVINGGKHAGNDLSIQEFMIQPKGADTFSNALRMGAETYHALGKVLEDKYGASATNVGYEGGYAPPISTTADALDALVSAIEEAGYTESEISIGLDSAASEFFDGDKYFIDGNKLAPAELVDYYLDLIETYPILSIEDPFHEESFEDFAALTSEAWDTIIVGDDLFVTNVNRLAKGIEMEAANALLLKVNQIGTISESFDAANLAQRNGYSVVVSHRSAETEDTMIADISVAIGGDLIKTGAPARSERTAKYNQLLRIEEDLGDAARYVQL.

(2R)-2-phosphoglycerate is bound at residue Gln-170. The active-site Proton donor is Glu-214. Mg(2+)-binding residues include Asp-250, Glu-291, and Asp-317. (2R)-2-phosphoglycerate is bound by residues Lys-342, Arg-371, Ser-372, and Lys-393. The active-site Proton acceptor is Lys-342.

Belongs to the enolase family. It depends on Mg(2+) as a cofactor.

It is found in the cytoplasm. Its subcellular location is the secreted. It localises to the cell surface. The enzyme catalyses (2R)-2-phosphoglycerate = phosphoenolpyruvate + H2O. It functions in the pathway carbohydrate degradation; glycolysis; pyruvate from D-glyceraldehyde 3-phosphate: step 4/5. Its function is as follows. Catalyzes the reversible conversion of 2-phosphoglycerate (2-PG) into phosphoenolpyruvate (PEP). It is essential for the degradation of carbohydrates via glycolysis. The chain is Enolase from Methanococcoides burtonii (strain DSM 6242 / NBRC 107633 / OCM 468 / ACE-M).